Here is a 497-residue protein sequence, read N- to C-terminus: MQYIPFLISGLVPVALSKSLFEATSNTRIDGNDIAAIFGPVLTPEAHIFLPSDGDYDDNVMARWSTFNDPSYVATVKPATETDVQAIREYQVSTAASHNITFFATGGGHGVKLNFGNVQNAINIELSLLDFIDLDLDNEVVTIGPGVENAQLYDLLSSVGKETALTGERCVNTIGPTLGGGLGPLYGIRGPQVDSLVSARLVTASGDVITVSRSENRDLFWAIRGAGANFGIVTSATYRIYDQTNGGMAVSAQFAFAPAVNRSVFDLMESMNDEYPPGMSGGMILSYNHTTNEPSVQWNLLFMGSNEDAQPWLDKIQALGPIDSSIRNVPWHRRDEPEVPYCERGQHYILYNLNLRRTDAATLQSYFDSFVDFSSKNPWFDCDLMYERQATDAALAVPLSERGVGPWRDSKINANFLVVTPSEEYDEAADAFVRPFMDRFQAVMGFDTLHVYVNEALGDEGPASWYGEENLPRLVALKQQWDPENKFGAGAPIPLSL.

Residues 1–17 form the signal peptide; the sequence is MQYIPFLISGLVPVALS. An FAD-binding PCMH-type domain is found at 68–243; sequence NDPSYVATVK…TSATYRIYDQ (176 aa). N-linked (GlcNAc...) asparagine glycosylation is found at asparagine 99, asparagine 261, and asparagine 288.

This sequence belongs to the oxygen-dependent FAD-linked oxidoreductase family.

It is found in the secreted. Its subcellular location is the cell wall. It participates in alkaloid biosynthesis. FAD-linked oxidoreductase; part of the gene cluster that mediates the biosynthesis of the antitumor fumiquinazolines that confer a dual-usage capability to defend against phagocytes in the environment and animal hosts. The simplest member is fumiquinazoline F (FQF) with a 6-6-6 tricyclic core derived from anthranilic acid (Ant), tryptophan (Trp), and alanine (Ala). The trimodular NRPS fmqA is responsible for FQF formation. Modules 1, 2 and 3 of fmqA are predicted to activate and load Ant, Trp and Ala, respectively, providing for the assembly of an Ant-Trp-Ala-S-enzyme intermediate that would undergo double cyclization for chain release and generation of the tricyclic 6-6-6 product fumiquinazoline F. The presence of an E domain predicted for module 2 of fmqA is consistent with epimerization of L-Trp to D-Trp during assembly to generate the R-stereocenter at C14 of FQF. The FAD-dependent monooxygenase fmqB and the monomodular NRPS fmqC then maturate FQF to FQA. FmqB oxidizes the 2',3'-double bond of the indole side chain of FQF, and fmqC activates L-Ala as the adenylate, installs it as the pantetheinyl thioester on its carrier protein domain, and acylates the oxidized indole for subsequent intramolecular cyclization to create the 6-5-5-imidazolindolone of FQA. The FAD-linked oxidoreductase fmqD introduces a third layer of scaffold complexity by converting FQA to the spirohemiaminal FQC, presumably by catalyzing the formation of a transient imine within the pyrazinone ring. FQC subsequently converts nonenzymatically to the known cyclic aminal FQD. This is FAD-linked oxidoreductase fmqD from Aspergillus fumigatus (strain ATCC MYA-4609 / CBS 101355 / FGSC A1100 / Af293) (Neosartorya fumigata).